A 122-amino-acid polypeptide reads, in one-letter code: MVDNNYAVRLASRNGYIEVVKYLVSIGADIKADDDYAVKWASRYGHLRVVKFLVSQGADIRVNNDYAVQLASENGHFDVVKYLVSQDANIRADDDYAVKLASVNGHVEVVKYLVSQGAVLNQ.

ANK repeat units lie at residues D3 to A32, D33 to V62, N63 to A92, and D94 to Q122.

In Acanthamoeba polyphaga (Amoeba), this protein is Putative ankyrin repeat protein L22.